The following is a 486-amino-acid chain: Virulence sensor protein PhoQ (486 aa).

Topologically, residues Met-1–Arg-16 are cytoplasmic. A helical membrane pass occupies residues Phe-17 to Leu-37. Residues Ile-38–Trp-194 are Periplasmic-facing. Residues Asp-151 and Asp-152 each coordinate a divalent metal cation. A helical membrane pass occupies residues Phe-195–Trp-215. The region spanning Trp-215 to Asp-266 is the HAMP domain. Residues Trp-216–Glu-486 lie on the Cytoplasmic side of the membrane. Residues Asp-274–His-480 form the Histidine kinase domain. His-277 carries the post-translational modification Phosphohistidine; by autocatalysis. Asn-385 is a Mg(2+) binding site. ATP-binding positions include Asn-385–Tyr-393, Asp-415–Ile-420, and Arg-434–Leu-446. Gln-442 contributes to the Mg(2+) binding site.

In terms of assembly, homodimer.

The protein resides in the cell inner membrane. The catalysed reaction is ATP + protein L-histidine = ADP + protein N-phospho-L-histidine.. Functionally, member of the two-component regulatory system PhoP/PhoQ involved in virulence and adaptation to low Mg(2+) environments. In low periplasmic Mg(2+), PhoQ functions as a membrane-associated protein kinase that undergoes autophosphorylation and subsequently transfers the phosphate to PhoP, which results in the expression of PhoP-activated genes (PAG) and repression of PhoP-repressed genes (PRG). In high periplasmic Mg(2+), acts as a protein phosphatase that dephosphorylates phospho-PhoP, which results in the repression of PAG and may lead to expression of some PRG. Necessary for resistance to killing by polymorphonuclear leukocytes (PMNs) and cationic antimicrobial peptides (CAMP) they produce. The polypeptide is Virulence sensor protein PhoQ (phoQ) (Shigella flexneri).